Reading from the N-terminus, the 422-residue chain is FAD-dependent monooxygenase ptmM (422 aa).

Residues 8–24 (VIIVGGSIAGLTLAHCL) traverse the membrane as a helical segment. FAD-binding residues include glutamate 35, glycine 49, arginine 108, aspartate 308, and alanine 321.

This sequence belongs to the paxM FAD-dependent monooxygenase family. It depends on FAD as a cofactor.

It localises to the membrane. Its pathway is secondary metabolite biosynthesis. Functionally, FAD-dependent monooxygenase; part of the gene cluster that mediates the biosynthesis of the indole diterpenes penitrems. The geranylgeranyl diphosphate (GGPP) synthase ptmG catalyzes the first step in penitrem biosynthesis via conversion of farnesyl pyrophosphate and isopentyl pyrophosphate into geranylgeranyl pyrophosphate (GGPP). Condensation of indole-3-glycerol phosphate with GGPP by the prenyl transferase ptmC then forms 3-geranylgeranylindole (3-GGI). Epoxidation by the FAD-dependent monooxygenase ptmM leads to a epoxidized-GGI that is substrate of the terpene cyclase ptmB for cyclization to yield paspaline. Paspaline is subsequently converted to 13-desoxypaxilline by the cytochrome P450 monooxygenase ptmP, the latter being then converted to paxilline by the cytochrome P450 monooxygenase ptmQ. Paxilline is converted to beta-paxitriol via C-10 ketoreduction by the short-chain dehydrogenase ptmH which can be monoprenylated at the C-20 by the indole diterpene prenyltransferase ptmD. A two-step elimination (acetylation and elimination) process performed by the O-acetyltransferase ptmV and ptmI leads to the production of the prenylated form of penijanthine. The FAD-linked oxidoreductase ptmO then converts the prenylated form of penijanthine into PC-M5 which is in turn transformed into PC-M4 by the aromatic dimethylallyltransferase ptmE. Five sequential oxidative transformations performed by the cytochrome P450 monooxygenases ptmK, ptmU, ptmL, ptmN and ptmJ yield the various penitrem compounds. PtmK, ptmU and ptmM are involved in the formation of the key bicyclic ring of penitrem C via the formation of the intermediates secopenitrem D and penitrem D. PtmL catalyzes the epoxidation of penitrem D and C to yield penitrem B and F, respectively. PtmJ catalyzes the last benzylic hydroxylation to convert penitrem B to prenitrem E and penitrem F to penitrem A. The sequence is that of FAD-dependent monooxygenase ptmM from Penicillium ochrochloron.